The following is a 207-amino-acid chain: uncharacterized protein (207 aa).

A helical membrane pass occupies residues 177-197; it reads LILAIGFIIGILLPTFFILLG.

It is found in the membrane. This is an uncharacterized protein from Haemophilus influenzae (strain ATCC 51907 / DSM 11121 / KW20 / Rd).